A 145-amino-acid chain; its full sequence is MLHTIKPVTNARKSTKRLGRGPGSGTGKTSGKGHKGQLARSGKTLRPGFEGGQIPFFQRIPKRGFHNFSQKRYALLNLKTLESFPQDTVVTPQLLLEKKIIKDQLCGIKVLSQGTLTKKLLVKASKFSKQAQAAILAVGGNIEVI.

The segment at 1-50 (MLHTIKPVTNARKSTKRLGRGPGSGTGKTSGKGHKGQLARSGKTLRPGFE) is disordered. Residues 20–30 (RGPGSGTGKTS) are compositionally biased toward gly residues.

The protein belongs to the universal ribosomal protein uL15 family. In terms of assembly, part of the 50S ribosomal subunit.

Functionally, binds to the 23S rRNA. The polypeptide is Large ribosomal subunit protein uL15 (Aster yellows witches'-broom phytoplasma (strain AYWB)).